The following is a 220-amino-acid chain: Aspartic protease inhibitor 5 (220 aa).

The signal sequence occupies residues 1-23 (MMKCLFLLCLCLLPIVVFSSTFT). The propeptide occupies 24 to 32 (SQNLIDLPS). The Vacuolar targeting signal signature appears at 26–31 (NLIDLP). Asparagine 51 is a glycosylation site (N-linked (GlcNAc...) asparagine). 2 disulfides stabilise this stretch: cysteine 80-cysteine 125 and cysteine 174-cysteine 185.

The protein belongs to the protease inhibitor I3 (leguminous Kunitz-type inhibitor) family.

The protein localises to the vacuole. Inhibitor of cathepsin D (aspartic protease). May also inhibit trypsin and chymotrypsin (serine proteases). Protects the plant by inhibiting proteases of invading organisms. The sequence is that of Aspartic protease inhibitor 5 from Solanum tuberosum (Potato).